Consider the following 91-residue polypeptide: Putative regulatory protein Tlet_1629 (91 aa).

The protein belongs to the RemA family.

This is Putative regulatory protein Tlet_1629 from Pseudothermotoga lettingae (strain ATCC BAA-301 / DSM 14385 / NBRC 107922 / TMO) (Thermotoga lettingae).